The sequence spans 444 residues: Tol-Pal system protein TolB (444 aa).

Positions 1 to 18 (MKNIIYCILLLFSFNSYA) are cleaved as a signal peptide.

The protein belongs to the TolB family. In terms of assembly, the Tol-Pal system is composed of five core proteins: the inner membrane proteins TolA, TolQ and TolR, the periplasmic protein TolB and the outer membrane protein Pal. They form a network linking the inner and outer membranes and the peptidoglycan layer.

It localises to the periplasm. In terms of biological role, part of the Tol-Pal system, which plays a role in outer membrane invagination during cell division and is important for maintaining outer membrane integrity. This is Tol-Pal system protein TolB from Rickettsia bellii (strain OSU 85-389).